Reading from the N-terminus, the 532-residue chain is Pre-piRNA 3'-exonuclease trimmer (532 aa).

Positions 28, 30, 270, and 365 each coordinate Mg(2+). The chain crosses the membrane as a helical span at residues 503 to 523 (AGRFAIWSGSIVTGGLALYLI).

Belongs to the CAF1 family. As to quaternary structure, interacts with Papi/Tdrkh; interaction takes place on the mitochondrial surface and recruits PNLDC1/trimmer to PIWI-bound pre-piRNAs. Mg(2+) serves as cofactor.

It localises to the mitochondrion outer membrane. In terms of biological role, 3'-5' exonuclease that specifically cleaves precursor piRNAs (pre-piRNAs) at their 3' ends. Trims pre-piRNAs to their mature size, a process required for piRNAs maturation and stabilization, and subsequent pre-piRNAs 2'-O-methylation. The piRNA metabolic process mediates the repression of transposable elements during meiosis by forming complexes composed of piRNAs and Piwi proteins and govern the methylation and subsequent repression of transposons. The protein is Pre-piRNA 3'-exonuclease trimmer of Bombyx mori (Silk moth).